The following is a 212-amino-acid chain: GTP-binding nuclear protein Ran (212 aa).

A Small GTPase Ran-type domain is found at 3–167; that stretch reads EKEQIKLVLV…VWLTSKLLGN (165 aa). A GTP-binding site is contributed by 14-21; that stretch reads DGGVGKTT. The interval 33-41 is switch-I; it reads PRYIPTLGV. Residues Gly-64, 118–121, and 146–148 each bind GTP; these read NKVD and SAK. A switch-II region spans residues 64–80; that stretch reads GQEKFGGLRDGYYIQGN.

It belongs to the small GTPase superfamily. Ran family. In terms of assembly, found in a nuclear export complex with RanGTP, exportin and pre-miRNA.

It localises to the nucleus. Functionally, GTP-binding protein involved in nucleocytoplasmic transport. Required for the import of protein into the nucleus and also for RNA export. Involved in chromatin condensation and control of cell cycle. The protein is GTP-binding nuclear protein Ran (ranA) of Dictyostelium discoideum (Social amoeba).